A 325-amino-acid polypeptide reads, in one-letter code: tRNA-dihydrouridine(16) synthase (325 aa).

FMN is bound by residues 12-14 (PMQ) and Q73. C103 functions as the Proton donor in the catalytic mechanism. Residues K144, 205–207 (NGE), and 229–230 (GR) contribute to the FMN site.

This sequence belongs to the Dus family. DusC subfamily. It depends on FMN as a cofactor.

The catalysed reaction is 5,6-dihydrouridine(16) in tRNA + NADP(+) = uridine(16) in tRNA + NADPH + H(+). The enzyme catalyses 5,6-dihydrouridine(16) in tRNA + NAD(+) = uridine(16) in tRNA + NADH + H(+). In terms of biological role, catalyzes the synthesis of 5,6-dihydrouridine (D), a modified base found in the D-loop of most tRNAs, via the reduction of the C5-C6 double bond in target uridines. Specifically modifies U16 in tRNAs. The protein is tRNA-dihydrouridine(16) synthase of Haemophilus ducreyi (strain 35000HP / ATCC 700724).